A 493-amino-acid chain; its full sequence is uncharacterized protein (493 aa).

Residues 316–403 form a disordered region; that stretch reads LNMVNFGPDD…NSVDNSVHDS (88 aa). Positions 338–353 are enriched in low complexity; sequence ESQNNSESNSESITES. Residues 371–398 show a composition bias toward polar residues; that stretch reads SQDNDTVQIDKSTSSDSVHNYFDNSVDN.

Belongs to the mimivirus R69 family.

This is an uncharacterized protein from Acanthamoeba polyphaga (Amoeba).